The following is a 247-amino-acid chain: Oil body-associated protein 2A (247 aa).

The tract at residues Met-1–Lys-26 is disordered.

It belongs to the OBAP family.

The protein is Oil body-associated protein 2A of Arabidopsis thaliana (Mouse-ear cress).